A 470-amino-acid chain; its full sequence is Serine hydroxymethyltransferase, cytosolic (470 aa).

Residues M1–R11 show a composition bias toward polar residues. The segment at M1 to P23 is disordered. At S2 the chain carries N-acetylserine. The span at Q12–P23 shows a compositional bias: basic and acidic residues. K249 carries the N6-(pyridoxal phosphate)lysine modification.

Belongs to the SHMT family. In terms of assembly, homotetramer. The cofactor is pyridoxal 5'-phosphate.

It localises to the cytoplasm. It catalyses the reaction (6R)-5,10-methylene-5,6,7,8-tetrahydrofolate + glycine + H2O = (6S)-5,6,7,8-tetrahydrofolate + L-serine. Its pathway is one-carbon metabolism; tetrahydrofolate interconversion. Functionally, interconversion of serine and glycine. This chain is Serine hydroxymethyltransferase, cytosolic (SHM2), found in Candida albicans (strain SC5314 / ATCC MYA-2876) (Yeast).